The chain runs to 395 residues: S-adenosylmethionine synthase (395 aa).

Position 16 (histidine 16) interacts with ATP. Aspartate 18 is a binding site for Mg(2+). Position 44 (glutamate 44) interacts with K(+). Residues glutamate 57 and glutamine 100 each coordinate L-methionine. Residues 100-110 (QSPDIAQGVDR) are flexible loop. Residues 167 to 169 (DAK), 233 to 234 (RF), aspartate 242, 248 to 249 (RK), alanine 265, and lysine 269 each bind ATP. Aspartate 242 contributes to the L-methionine binding site. Residue lysine 273 coordinates L-methionine.

The protein belongs to the AdoMet synthase family. Homotetramer; dimer of dimers. Mg(2+) serves as cofactor. K(+) is required as a cofactor.

It localises to the cytoplasm. It catalyses the reaction L-methionine + ATP + H2O = S-adenosyl-L-methionine + phosphate + diphosphate. It participates in amino-acid biosynthesis; S-adenosyl-L-methionine biosynthesis; S-adenosyl-L-methionine from L-methionine: step 1/1. Its function is as follows. Catalyzes the formation of S-adenosylmethionine (AdoMet) from methionine and ATP. The overall synthetic reaction is composed of two sequential steps, AdoMet formation and the subsequent tripolyphosphate hydrolysis which occurs prior to release of AdoMet from the enzyme. The protein is S-adenosylmethionine synthase of Burkholderia vietnamiensis (strain G4 / LMG 22486) (Burkholderia cepacia (strain R1808)).